Consider the following 464-residue polypeptide: 3-isopropylmalate dehydratase large subunit (464 aa).

[4Fe-4S] cluster is bound by residues Cys337, Cys397, and Cys400.

The protein belongs to the aconitase/IPM isomerase family. LeuC type 1 subfamily. As to quaternary structure, heterodimer of LeuC and LeuD. The cofactor is [4Fe-4S] cluster.

It catalyses the reaction (2R,3S)-3-isopropylmalate = (2S)-2-isopropylmalate. It functions in the pathway amino-acid biosynthesis; L-leucine biosynthesis; L-leucine from 3-methyl-2-oxobutanoate: step 2/4. Its function is as follows. Catalyzes the isomerization between 2-isopropylmalate and 3-isopropylmalate, via the formation of 2-isopropylmaleate. This chain is 3-isopropylmalate dehydratase large subunit, found in Bacillus cereus (strain ZK / E33L).